Consider the following 538-residue polypeptide: Histone-arginine methyltransferase CARMER (538 aa).

The region spanning 148-457 is the SAM-dependent MTase PRMT-type domain; sequence ASQYFQFYGY…QSYDVTIDLH (310 aa). S-adenosyl-L-methionine-binding residues include Gln-161, Arg-170, Gly-194, Glu-216, Glu-245, and Thr-273. Arg-508 bears the Asymmetric dimethylarginine; by autocatalysis mark.

It belongs to the class I-like SAM-binding methyltransferase superfamily. Protein arginine N-methyltransferase family. Homodimer. The dimethylated protein is the major form.

It localises to the cytoplasm. It is found in the nucleus. It carries out the reaction L-arginyl-[protein] + 2 S-adenosyl-L-methionine = N(omega),N(omega)-dimethyl-L-arginyl-[protein] + 2 S-adenosyl-L-homocysteine + 2 H(+). Functionally, methylates (mono- and asymmetric dimethylation) the guanidino nitrogens of arginyl residues in proteins. May methylate histone H3 at 'Arg-17' and activate transcription via chromatin remodeling. The chain is Histone-arginine methyltransferase CARMER (Art4) from Drosophila virilis (Fruit fly).